The following is a 241-amino-acid chain: Endothelial protein C receptor (241 aa).

The N-terminal stretch at 1–20 is a signal peptide; it reads MLTKFLSLLLLLLLLGCAFC. Over 21 to 213 the chain is Extracellular; the sequence is NSDGSQSLHM…GSQTGRSYTS (193 aa). N-linked (GlcNAc...) asparagine glycosylation is found at asparagine 47, asparagine 64, asparagine 139, asparagine 165, and asparagine 175. Residues 214 to 234 traverse the membrane as a helical segment; that stretch reads LVLGILMGCFIIAGVAVGIFL. At 235-241 the chain is on the cytoplasmic side; the sequence is CTGGRRC.

It is found in the membrane. Functionally, binds activated protein C. Enhances protein C activation by the thrombin-thrombomodulin complex; plays a role in the protein C pathway controlling blood coagulation. The chain is Endothelial protein C receptor (Procr) from Rattus norvegicus (Rat).